The chain runs to 625 residues: 1-deoxy-D-xylulose-5-phosphate synthase (625 aa).

Thiamine diphosphate-binding positions include His-84 and 125–127; that span reads GHS. Asp-156 contacts Mg(2+). Residues 157 to 158, Asn-185, Phe-292, and Glu-373 each bind thiamine diphosphate; that span reads GA. Asn-185 contacts Mg(2+).

The protein belongs to the transketolase family. DXPS subfamily. As to quaternary structure, homodimer. Requires Mg(2+) as cofactor. It depends on thiamine diphosphate as a cofactor.

It carries out the reaction D-glyceraldehyde 3-phosphate + pyruvate + H(+) = 1-deoxy-D-xylulose 5-phosphate + CO2. It functions in the pathway metabolic intermediate biosynthesis; 1-deoxy-D-xylulose 5-phosphate biosynthesis; 1-deoxy-D-xylulose 5-phosphate from D-glyceraldehyde 3-phosphate and pyruvate: step 1/1. In terms of biological role, catalyzes the acyloin condensation reaction between C atoms 2 and 3 of pyruvate and glyceraldehyde 3-phosphate to yield 1-deoxy-D-xylulose-5-phosphate (DXP). This chain is 1-deoxy-D-xylulose-5-phosphate synthase, found in Marinomonas sp. (strain MWYL1).